Here is a 347-residue protein sequence, read N- to C-terminus: Putative phosphoesterase 078R (347 aa).

The a divalent metal cation site is built by aspartate 52, asparagine 87, and histidine 211.

This sequence belongs to the metallophosphoesterase superfamily. IIV-6 244L family.

The polypeptide is Putative phosphoesterase 078R (Invertebrate iridescent virus 3 (IIV-3)).